A 60-amino-acid chain; its full sequence is Cytotoxin 10 (60 aa).

Disulfide bonds link cysteine 3–cysteine 21, cysteine 14–cysteine 38, cysteine 42–cysteine 53, and cysteine 54–cysteine 59.

This sequence belongs to the three-finger toxin family. Short-chain subfamily. Type IA cytotoxin sub-subfamily. In terms of assembly, monomer in solution; Homodimer and oligomer in the presence of negatively charged lipids forming a pore with a size ranging between 20 and 30 Angstroms. Expressed by the venom gland.

It is found in the secreted. The protein resides in the target cell membrane. Shows cytolytic activity on many different cells by forming pore in lipid membranes. In vivo, increases heart rate or kills the animal by cardiac arrest. In addition, it binds to heparin with high affinity, interacts with Kv channel-interacting protein 1 (KCNIP1) in a calcium-independent manner, and binds to integrin alpha-V/beta-3 (ITGAV/ITGB3) with moderate affinity. Has hemolytic activity towards human erythrocytes (EC(50)=0.162 uM) and cytolytic activity towards various cell lines. This Naja naja (Indian cobra) protein is Cytotoxin 10.